The primary structure comprises 230 residues: Small ribosomal subunit protein uS3c (230 aa).

The KH type-2 domain maps to 39–109; sequence IRSFIHGKLS…QIRVNVVEIS (71 aa).

Belongs to the universal ribosomal protein uS3 family. As to quaternary structure, part of the 30S ribosomal subunit.

It is found in the plastid. Its subcellular location is the chloroplast. This chain is Small ribosomal subunit protein uS3c (rps3), found in Porphyra purpurea (Red seaweed).